Consider the following 25-residue polypeptide: Defensin D3 (25 aa).

The protein belongs to the DEFL family. Group IV subfamily. As to expression, distributed in the epidermal cell layer of leaves and in the subepidermal layer region of stems. Not in roots.

The protein resides in the secreted. The protein localises to the cell wall. In terms of biological role, antimicrobial peptide. Active against Fusarium spp., Gram-positive and Gram-negative bacterial pathogens. The polypeptide is Defensin D3 (Spinacia oleracea (Spinach)).